The chain runs to 298 residues: HTH-type transcriptional regulator ArgP (298 aa).

The 57-residue stretch at 4–60 folds into the HTH lysR-type domain; sequence VDYRWVAALDAVIAQRGFERAAEKLCITQSAVSQRIKQLEKLMAQPLLVREQPPRPT. Residues 21 to 40 constitute a DNA-binding region (H-T-H motif); it reads FERAAEKLCITQSAVSQRIK.

This sequence belongs to the LysR transcriptional regulatory family. As to quaternary structure, homodimer.

Its function is as follows. Controls the transcription of genes involved in arginine and lysine metabolism. This Photobacterium profundum (strain SS9) protein is HTH-type transcriptional regulator ArgP.